The primary structure comprises 125 residues: MSQSIEDYLERIYLFIKENNRPIKTTELAKLLNIKPSAVTNMAKKLHRLGYVNYEPYIGITLTEKGIEEAKKILDKHKTIKIFLVEFLGLDEKTASEEACKLEHALSDEILERLKIFMEKFKDKV.

The HTH dtxR-type domain maps to 1 to 63 (MSQSIEDYLE…YEPYIGITLT (63 aa)).

The protein belongs to the DtxR/MntR family.

This is an uncharacterized protein from Methanocaldococcus jannaschii (strain ATCC 43067 / DSM 2661 / JAL-1 / JCM 10045 / NBRC 100440) (Methanococcus jannaschii).